The sequence spans 291 residues: Elongation factor Ts (291 aa).

Positions 78–81 (TDFV) are involved in Mg(2+) ion dislocation from EF-Tu.

Belongs to the EF-Ts family.

Its subcellular location is the cytoplasm. Associates with the EF-Tu.GDP complex and induces the exchange of GDP to GTP. It remains bound to the aminoacyl-tRNA.EF-Tu.GTP complex up to the GTP hydrolysis stage on the ribosome. The sequence is that of Elongation factor Ts from Ureaplasma parvum serovar 3 (strain ATCC 27815 / 27 / NCTC 11736).